The primary structure comprises 920 residues: Isoleucine--tRNA ligase (920 aa).

Residues 58–68 (PYANGHLHLGH) carry the 'HIGH' region motif. Glu-569 is an L-isoleucyl-5'-AMP binding site. A 'KMSKS' region motif is present at residues 610–614 (KMSKS). Lys-613 is a binding site for ATP. Cys-895, Cys-898, Cys-910, and Cys-913 together coordinate Zn(2+).

Belongs to the class-I aminoacyl-tRNA synthetase family. IleS type 1 subfamily. Monomer. Zn(2+) serves as cofactor.

It is found in the cytoplasm. It catalyses the reaction tRNA(Ile) + L-isoleucine + ATP = L-isoleucyl-tRNA(Ile) + AMP + diphosphate. Functionally, catalyzes the attachment of isoleucine to tRNA(Ile). As IleRS can inadvertently accommodate and process structurally similar amino acids such as valine, to avoid such errors it has two additional distinct tRNA(Ile)-dependent editing activities. One activity is designated as 'pretransfer' editing and involves the hydrolysis of activated Val-AMP. The other activity is designated 'posttransfer' editing and involves deacylation of mischarged Val-tRNA(Ile). The chain is Isoleucine--tRNA ligase from Helicobacter pylori (strain P12).